Here is a 223-residue protein sequence, read N- to C-terminus: Large ribosomal subunit protein uL3 (223 aa).

The disordered stretch occupies residues glycine 137–glutamine 157. Position 157 is an N5-methylglutamine (glutamine 157).

It belongs to the universal ribosomal protein uL3 family. As to quaternary structure, part of the 50S ribosomal subunit. Forms a cluster with proteins L14 and L19. In terms of processing, methylated by PrmB.

In terms of biological role, one of the primary rRNA binding proteins, it binds directly near the 3'-end of the 23S rRNA, where it nucleates assembly of the 50S subunit. The protein is Large ribosomal subunit protein uL3 of Burkholderia pseudomallei (strain 1106a).